The following is a 445-amino-acid chain: Protein trichome berefringence-like 7 (445 aa).

A helical; Signal-anchor for type II membrane protein membrane pass occupies residues 69 to 89 (IIAGTIVSFLVIIAGGYLYVV). The GDS motif motif lies at 188 to 190 (GDS). A DCXHWCLPGXXDXWN motif motif is present at residues 418–432 (DCSHWCLPGVPDIWN).

This sequence belongs to the PC-esterase family. TBL subfamily.

Its subcellular location is the membrane. In terms of biological role, may act as a bridging protein that binds pectin and other cell wall polysaccharides. Probably involved in maintaining esterification of pectins. May be involved in the specific O-acetylation of cell wall polymers. This Arabidopsis thaliana (Mouse-ear cress) protein is Protein trichome berefringence-like 7 (TBL7).